The sequence spans 54 residues: Ductus ejaculatorius peptide 99B (54 aa).

The first 21 residues, methionine 1–serine 21, serve as a signal peptide directing secretion. Glutamine 22 bears the Pyrrolidone carboxylic acid mark. Asparagine 25 carries an N-linked (GlcNAc...) asparagine glycan. A disulfide bond links cysteine 40 and cysteine 52. A propeptide spanning residues arginine 53–lysine 54 is cleaved from the precursor.

It to paragonial peptide B. Ductus ejaculatorius.

The protein localises to the secreted. Its function is as follows. Induces post-mating responses; increased oviposition and reduced receptivity. The sequence is that of Ductus ejaculatorius peptide 99B (Dup99B) from Drosophila melanogaster (Fruit fly).